A 185-amino-acid polypeptide reads, in one-letter code: Ribosome-recycling factor (185 aa).

Belongs to the RRF family.

It is found in the cytoplasm. Functionally, responsible for the release of ribosomes from messenger RNA at the termination of protein biosynthesis. May increase the efficiency of translation by recycling ribosomes from one round of translation to another. This is Ribosome-recycling factor from Clostridium novyi (strain NT).